A 123-amino-acid chain; its full sequence is Large ribosomal subunit protein bL17 (123 aa).

It belongs to the bacterial ribosomal protein bL17 family. As to quaternary structure, part of the 50S ribosomal subunit. Contacts protein L32.

This Borreliella burgdorferi (strain ZS7) (Borrelia burgdorferi) protein is Large ribosomal subunit protein bL17.